A 126-amino-acid chain; its full sequence is MAVAKEEILETISNMTVMDVVELIEAMEEKFGVSAAAPIAAAAPAAGAEAGAAAEEKTEFDVVLVSFGSNKVQVIKAVRSITSLGLKEAKDLVEGAPSPVKEGISKDEADEIKKQLEEAGASIEVK.

It belongs to the bacterial ribosomal protein bL12 family. Homodimer. Part of the ribosomal stalk of the 50S ribosomal subunit. Forms a multimeric L10(L12)X complex, where L10 forms an elongated spine to which 2 to 4 L12 dimers bind in a sequential fashion. Binds GTP-bound translation factors.

Forms part of the ribosomal stalk which helps the ribosome interact with GTP-bound translation factors. Is thus essential for accurate translation. The polypeptide is Large ribosomal subunit protein bL12 (Nitrosococcus oceani (strain ATCC 19707 / BCRC 17464 / JCM 30415 / NCIMB 11848 / C-107)).